Reading from the N-terminus, the 181-residue chain is Kappa-casein (181 aa).

An N-terminal signal peptide occupies residues 1 to 21 (MMRNFIVVVNILALTLPFLAA). Residue Thr123 is modified to Phosphothreonine. O-linked (GalNAc...) threonine glycans are attached at residues Thr134, Thr144, and Thr155. Ser162 bears the Phosphoserine; alternate mark. An O-linked (GalNAc...) serine; alternate glycan is attached at Ser162. Ser178 carries the post-translational modification Phosphoserine.

This sequence belongs to the kappa-casein family. As to expression, mammary gland specific. Secreted in milk.

The protein resides in the secreted. In terms of biological role, kappa-casein stabilizes micelle formation, preventing casein precipitation in milk. This Mus musculus (Mouse) protein is Kappa-casein (Csn3).